The chain runs to 213 residues: Large ribosomal subunit protein uL3 (213 aa).

The disordered stretch occupies residues 131–155 (GRASHGNSVSHRAHGSTGNNQDPGR). The span at 135–152 (HGNSVSHRAHGSTGNNQD) shows a compositional bias: polar residues. Q151 carries the post-translational modification N5-methylglutamine.

This sequence belongs to the universal ribosomal protein uL3 family. In terms of assembly, part of the 50S ribosomal subunit. Forms a cluster with proteins L14 and L19. Post-translationally, methylated by PrmB.

Functionally, one of the primary rRNA binding proteins, it binds directly near the 3'-end of the 23S rRNA, where it nucleates assembly of the 50S subunit. This chain is Large ribosomal subunit protein uL3, found in Agrobacterium fabrum (strain C58 / ATCC 33970) (Agrobacterium tumefaciens (strain C58)).